Reading from the N-terminus, the 360-residue chain is Chorismate synthase (360 aa).

NADP(+) is bound at residue R46. FMN-binding positions include 122-124 (RAS), G282, 297-301 (KPTPS), and R324.

The protein belongs to the chorismate synthase family. FMNH2 is required as a cofactor.

It carries out the reaction 5-O-(1-carboxyvinyl)-3-phosphoshikimate = chorismate + phosphate. It functions in the pathway metabolic intermediate biosynthesis; chorismate biosynthesis; chorismate from D-erythrose 4-phosphate and phosphoenolpyruvate: step 7/7. Catalyzes the anti-1,4-elimination of the C-3 phosphate and the C-6 proR hydrogen from 5-enolpyruvylshikimate-3-phosphate (EPSP) to yield chorismate, which is the branch point compound that serves as the starting substrate for the three terminal pathways of aromatic amino acid biosynthesis. This reaction introduces a second double bond into the aromatic ring system. This is Chorismate synthase from Archaeoglobus fulgidus (strain ATCC 49558 / DSM 4304 / JCM 9628 / NBRC 100126 / VC-16).